Here is a 175-residue protein sequence, read N- to C-terminus: Ribulose bisphosphate carboxylase small subunit, chloroplastic 2 (175 aa).

Residues 1–46 constitute a chloroplast transit peptide; sequence MAPAVMASSATTVAPFQGLKSTAGLPISCRSGSTGLSSVSNGGRIR.

The protein belongs to the RuBisCO small chain family. As to quaternary structure, heterohexadecamer of 8 large and 8 small subunits.

It is found in the plastid. The protein resides in the chloroplast. Functionally, ruBisCO catalyzes two reactions: the carboxylation of D-ribulose 1,5-bisphosphate, the primary event in carbon dioxide fixation, as well as the oxidative fragmentation of the pentose substrate. Both reactions occur simultaneously and in competition at the same active site. Although the small subunit is not catalytic it is essential for maximal activity. In Triticum aestivum (Wheat), this protein is Ribulose bisphosphate carboxylase small subunit, chloroplastic 2.